Reading from the N-terminus, the 213-residue chain is Probable GH family 25 lysozyme 4 (213 aa).

The N-terminal stretch at 1–19 is a signal peptide; the sequence is MRLFLLLITFIALFGAINA. Positions 21–213 constitute a Ch-type lysozyme domain; the sequence is SGVDISQGSS…VGYDFNWYPN (193 aa). Residues D24, D112, and E114 contribute to the active site.

The protein belongs to the glycosyl hydrolase 25 family.

It localises to the secreted. The catalysed reaction is Hydrolysis of (1-&gt;4)-beta-linkages between N-acetylmuramic acid and N-acetyl-D-glucosamine residues in a peptidoglycan and between N-acetyl-D-glucosamine residues in chitodextrins.. In Dictyostelium discoideum (Social amoeba), this protein is Probable GH family 25 lysozyme 4.